The sequence spans 155 residues: Deoxyuridine 5'-triphosphate nucleotidohydrolase (155 aa).

Substrate is bound by residues 74–76, Asn-87, and 91–93; these read RSG and TID.

Belongs to the dUTPase family. Mg(2+) is required as a cofactor.

It catalyses the reaction dUTP + H2O = dUMP + diphosphate + H(+). The protein operates within pyrimidine metabolism; dUMP biosynthesis; dUMP from dCTP (dUTP route): step 2/2. This enzyme is involved in nucleotide metabolism: it produces dUMP, the immediate precursor of thymidine nucleotides and it decreases the intracellular concentration of dUTP so that uracil cannot be incorporated into DNA. The polypeptide is Deoxyuridine 5'-triphosphate nucleotidohydrolase (Cereibacter sphaeroides (strain KD131 / KCTC 12085) (Rhodobacter sphaeroides)).